Reading from the N-terminus, the 511-residue chain is Adenosine deaminase 2 (511 aa).

A signal peptide spans Met-1–Ser-29. A dimerization region spans residues Ile-30–Asn-100. 2 residues coordinate Zn(2+): His-112 and His-114. Residue Asp-115 coordinates substrate. Asn-127 is a glycosylation site (N-linked (GlcNAc...) asparagine). A PRB domain region spans residues Asn-127 to Asn-185. A disulfide bridge connects residues Cys-137 and Cys-159. 2 N-linked (GlcNAc...) asparagine glycosylation sites follow: Asn-174 and Asn-185. Substrate-binding positions include Trp-204 to Phe-211, His-293, and Gly-326. A Zn(2+)-binding site is contributed by His-356. Residue Glu-359 is the Proton donor of the active site. An N-linked (GlcNAc...) asparagine glycan is attached at Asn-378. His-384 functions as the Proton acceptor in the catalytic mechanism. Asp-441 contributes to the Zn(2+) binding site. Substrate is bound at residue Asp-442.

Belongs to the metallo-dependent hydrolases superfamily. Adenosine and AMP deaminases family. ADGF subfamily. Homodimer. Interacts with adenosine receptors. Binds heparin. Zn(2+) serves as cofactor.

It is found in the secreted. The enzyme catalyses adenosine + H2O + H(+) = inosine + NH4(+). Functionally, adenosine deaminase that may contribute to the degradation of extracellular adenosine, a signaling molecule that controls a variety of cellular responses. Requires elevated adenosine levels for optimal enzyme activity. Binds to cell surfaces via proteoglycans and may play a role in the regulation of cell proliferation and differentiation, independently of its enzyme activity. The sequence is that of Adenosine deaminase 2 from Pongo abelii (Sumatran orangutan).